Consider the following 425-residue polypeptide: Serine--tRNA ligase (425 aa).

Residue 230–232 (TAE) participates in L-serine binding. 261 to 263 (RSE) is an ATP binding site. Glutamate 284 contacts L-serine. Position 348 to 351 (348 to 351 (EISS)) interacts with ATP. Serine 384 lines the L-serine pocket.

This sequence belongs to the class-II aminoacyl-tRNA synthetase family. Type-1 seryl-tRNA synthetase subfamily. In terms of assembly, homodimer. The tRNA molecule binds across the dimer.

It localises to the cytoplasm. The enzyme catalyses tRNA(Ser) + L-serine + ATP = L-seryl-tRNA(Ser) + AMP + diphosphate + H(+). It catalyses the reaction tRNA(Sec) + L-serine + ATP = L-seryl-tRNA(Sec) + AMP + diphosphate + H(+). It participates in aminoacyl-tRNA biosynthesis; selenocysteinyl-tRNA(Sec) biosynthesis; L-seryl-tRNA(Sec) from L-serine and tRNA(Sec): step 1/1. Catalyzes the attachment of serine to tRNA(Ser). Is also able to aminoacylate tRNA(Sec) with serine, to form the misacylated tRNA L-seryl-tRNA(Sec), which will be further converted into selenocysteinyl-tRNA(Sec). In Streptococcus agalactiae serotype Ia (strain ATCC 27591 / A909 / CDC SS700), this protein is Serine--tRNA ligase.